A 533-amino-acid polypeptide reads, in one-letter code: MVLQKLPLMSIGLLWLLIIVGPLVNADGPVCPPKPSDKLSRAHFPKGFLFGTATAAYQVEGAVNETCRGPSVWDIYCKKYPEKCNGDNGTQAVDFFYRYKEDIQLMKNLNTDSFRLSISWTRIFPHGREENGVSKSGVQFYHDLIDELKRNGIIPFVTVFHWDTPQTLENEYGGFLSAHIVKDFREYAEFVFKEYGGKVKHWITFNEPWVFAHAGYDVGKKAPGRCSPYAKDETVKGDCLGGRSGYEAYLVSHNLLNAHAEAVEAFRQCEKCKGGKIGIAHSPAWFEPHDFKDEQSGATIDRALDFIMGWHLDTTMFGDYPQTMKDIVGHRLPKFTTEQIAKLKNSADFVGINYYTSTFSKHLEKPNHAEPKFKQDSLVEWKNKNVNNITIGSKPETGPLPVYSTGFRKVLKYVKDKYANPEIIIMENGYGENLKENDSVENGTADYNRESYLKKHLWSMHKAICEDKVNVTGYFVWSLMDNFEWQDGFKNRFGLYYIDYKNNLTRHEKVSGKYYREFLSEGVRPSAIKKDEL.

The first 26 residues, 1–26, serve as a signal peptide directing secretion; it reads MVLQKLPLMSIGLLWLLIIVGPLVNA. Residue glutamine 58 coordinates a beta-D-glucoside. N-linked (GlcNAc...) asparagine glycans are attached at residues asparagine 64 and asparagine 88. Residues histidine 161 and 206 to 207 contribute to the a beta-D-glucoside site; that span reads NE. Glutamate 207 acts as the Proton donor in catalysis. Residues cysteine 226 and cysteine 239 are joined by a disulfide bond. A beta-D-glucoside is bound at residue tyrosine 355. Asparagine 388 carries N-linked (GlcNAc...) asparagine glycosylation. Glutamate 427 provides a ligand contact to a beta-D-glucoside. The active-site Nucleophile is the glutamate 427. N-linked (GlcNAc...) asparagine glycans are attached at residues asparagine 437, asparagine 442, and asparagine 470. A beta-D-glucoside contacts are provided by residues tryptophan 477, 484 to 485, and phenylalanine 493; that span reads EW. N-linked (GlcNAc...) asparagine glycosylation is present at asparagine 503. Positions 530 to 533 match the Prevents secretion from ER motif; sequence KDEL.

The protein belongs to the glycosyl hydrolase 1 family.

Its subcellular location is the endoplasmic reticulum lumen. The enzyme catalyses Hydrolysis of terminal, non-reducing beta-D-glucosyl residues with release of beta-D-glucose.. This Arabidopsis thaliana (Mouse-ear cress) protein is Beta-glucosidase 24.